A 636-amino-acid polypeptide reads, in one-letter code: Threonine--tRNA ligase (636 aa).

Residues 1 to 63 (MNEINVTLPD…ADGARVEIIT (63 aa)) form the TGS domain. Positions 243–534 (DHRKLGRELD…LIEHFAGNFP (292 aa)) are catalytic. Residues C335, H386, and H511 each coordinate Zn(2+).

The protein belongs to the class-II aminoacyl-tRNA synthetase family. As to quaternary structure, homodimer. Requires Zn(2+) as cofactor.

The protein localises to the cytoplasm. It carries out the reaction tRNA(Thr) + L-threonine + ATP = L-threonyl-tRNA(Thr) + AMP + diphosphate + H(+). Functionally, catalyzes the attachment of threonine to tRNA(Thr) in a two-step reaction: L-threonine is first activated by ATP to form Thr-AMP and then transferred to the acceptor end of tRNA(Thr). Also edits incorrectly charged L-seryl-tRNA(Thr). This is Threonine--tRNA ligase from Citrifermentans bemidjiense (strain ATCC BAA-1014 / DSM 16622 / JCM 12645 / Bem) (Geobacter bemidjiensis).